Here is a 397-residue protein sequence, read N- to C-terminus: Methylthioribose kinase (397 aa).

ATP contacts are provided by residues Asn44, Lys61, and Glu115–Leu117. Residue Asp233 participates in substrate binding. Asp250 to Glu252 lines the ATP pocket. Residue Arg340 coordinates substrate.

It belongs to the methylthioribose kinase family. As to quaternary structure, homodimer.

It catalyses the reaction 5-(methylsulfanyl)-D-ribose + ATP = 5-(methylsulfanyl)-alpha-D-ribose 1-phosphate + ADP + H(+). It participates in amino-acid biosynthesis; L-methionine biosynthesis via salvage pathway; S-methyl-5-thio-alpha-D-ribose 1-phosphate from S-methyl-5'-thioadenosine (hydrolase route): step 2/2. Functionally, catalyzes the phosphorylation of methylthioribose into methylthioribose-1-phosphate. In Bacillus subtilis (strain 168), this protein is Methylthioribose kinase (mtnK).